The following is a 130-amino-acid chain: UPF0212 protein TSIB_1358 (130 aa).

It belongs to the UPF0212 family.

The chain is UPF0212 protein TSIB_1358 from Thermococcus sibiricus (strain DSM 12597 / MM 739).